The chain runs to 918 residues: Isoleucine--tRNA ligase (918 aa).

The 'HIGH' region motif lies at 57–67 (PYANGHIHIGT). Glu-552 serves as a coordination point for L-isoleucyl-5'-AMP. The 'KMSKS' region signature appears at 593–597 (KMSKS). Residue Lys-596 participates in ATP binding. Zn(2+) contacts are provided by Cys-886, Cys-889, Cys-906, and Cys-909.

The protein belongs to the class-I aminoacyl-tRNA synthetase family. IleS type 1 subfamily. In terms of assembly, monomer. Requires Zn(2+) as cofactor.

It is found in the cytoplasm. The enzyme catalyses tRNA(Ile) + L-isoleucine + ATP = L-isoleucyl-tRNA(Ile) + AMP + diphosphate. Catalyzes the attachment of isoleucine to tRNA(Ile). As IleRS can inadvertently accommodate and process structurally similar amino acids such as valine, to avoid such errors it has two additional distinct tRNA(Ile)-dependent editing activities. One activity is designated as 'pretransfer' editing and involves the hydrolysis of activated Val-AMP. The other activity is designated 'posttransfer' editing and involves deacylation of mischarged Val-tRNA(Ile). In Thermotoga neapolitana (strain ATCC 49049 / DSM 4359 / NBRC 107923 / NS-E), this protein is Isoleucine--tRNA ligase.